The following is a 1039-amino-acid chain: MDKRFKWPPKKRANYLESPYPHIPSRGRQRNLHGHPNQTQHLHQHPGKIYERQQYGNGRGGHGGGNNNYRKLLHSLPAEHGGGAMAPPSSGGTVCAGADMVKLISENNNLRRMVMLNLNLMQEQTDSIAAKDKELDDQSAKMSVVKAQNEELKQAVAQLEAANQELCKQLRRKNQRRNDNDDDDDDPPLPPAAPQQKLIRCHAETQTVFREREQGTQTIDAQPQFANALPRGINMKESPALDHHAGAVTNQPASKRSESKGRGEFNGKKVSTFILQRMNQDFEHHIHEQTEVAEEHEMEAHKEQISQEEDQLVAEEDHLHMQEVHTEEVVGGDIFHDALESIEMEVVTEELVDMEEHGQSVDANGHIEEDDDEDDEDDENSDKDDDSEEDDYPWMHSDADVNARTEEELWQNQNYLLELDPTEEKTCAPSAHSTPNHQQKSSTQAEIRKEGNQNRITEKLLQLKPEPMVDALEAPILPKWVAFKKKDKEHESVPESPEVPKQQPHQEDAIVDHNAIKNQLEVPKPDLKPKDQPKDEQRQDGQLDVRVEPQEDVRKVQKETLKRQPEDAPKHLPKAVAPKVTKTSSRESTLPKANTADIKDAPAQKVIANHQSTKTQTDPVKTQRLQVKIRQYEMHPDMRTGSSAPSDIRKQKNVDPVSTPETKTIKSKSMLVNDKKTTSETSQSPDQEIDVETVRRKLAEHLKKELLSQSHSSQVTLKKIRERVATNLIYPPPSAPVSSTTITPAPTPSTTPTPGSTPQHAVTSSMDQEISAAKSKSKAAEQIATPLTPQSNSSVSSTTSTIRKTLNNCSPHTYSKATARSGKLQSRFRTATFPYSTRTWEDQEFHCDNEFFLEEADELLADNPSLEIPKWRDVPVPPSSDKIDTELLSDATFERRHQKYVKDEVDRKCRDARYMKEQIRLEQLRMRRNQDEVLVALDPLRASTFYPLPEDIEAIQFVNEVTVQAFGENVVNMEARDDFGVPWVDAIEAPTSIARSKALAEPVATLASKKIPTTAAEARHQENHSSYVFPKRRKRQKNR.

Residues 1 to 13 (MDKRFKWPPKKRA) are compositionally biased toward basic residues. Disordered regions lie at residues 1-44 (MDKR…HLHQ) and 171-199 (RRKNQRRNDNDDDDDDPPLPPAAPQQKLI). Ser18 is subject to Phosphoserine. Ser238 bears the Phosphoserine mark. Disordered stretches follow at residues 244 to 266 (HAGAVTNQPASKRSESKGRGEFN), 358 to 454 (GQSV…GNQN), 485 to 691 (KKDK…EIDV), and 729 to 799 (IYPP…SSTT). Residues 255-266 (KRSESKGRGEFN) are compositionally biased toward basic and acidic residues. A compositionally biased stretch (acidic residues) spans 368 to 392 (EEDDDEDDEDDENSDKDDDSEEDDY). The segment covering 397–407 (SDADVNARTEE) has biased composition (basic and acidic residues). The span at 431–445 (AHSTPNHQQKSSTQA) shows a compositional bias: polar residues. Ser433 is modified (phosphoserine). Thr434 bears the Phosphothreonine mark. Residues Ser492 and Ser496 each carry the phosphoserine modification. 2 stretches are compositionally biased toward basic and acidic residues: residues 504-515 (PHQEDAIVDHNA) and 523-570 (PKPD…DAPK). Composition is skewed to polar residues over residues 581–592 (TKTSSRESTLPK) and 609–625 (NHQSTKTQTDPVKTQRL). At Ser585 the chain carries Phosphoserine. Phosphothreonine is present on Thr659. Phosphoserine is present on residues Ser682 and Ser684. Thr747 bears the Phosphothreonine mark. Residue Ser749 is modified to Phosphoserine. A phosphothreonine mark is found at Thr750, Thr751, and Thr753. Residues 759–768 (QHAVTSSMDQ) are compositionally biased toward polar residues. Residues Ser764 and Ser765 each carry the phosphoserine modification. Thr788 bears the Phosphothreonine mark. Ser810 is modified (phosphoserine). A phosphothreonine mark is found at Thr813 and Thr832. The region spanning 865 to 983 (SLEIPKWRDV…EARDDFGVPW (119 aa)) is the PEHE domain. Phosphoserine occurs at positions 879 and 889. The tract at residues 886–904 (ELLSDATFERRHQKYVKDE) is interaction with mof HAT domain. The tract at residues 1011–1039 (IPTTAAEARHQENHSSYVFPKRRKRQKNR) is disordered. Position 1014 is a phosphothreonine (Thr1014). Phosphoserine is present on Ser1025. Basic residues predominate over residues 1030–1039 (PKRRKRQKNR). A Nuclear localization signal motif is present at residues 1032–1037 (RRKRQK).

The protein belongs to the msl-1 family. As to quaternary structure, component of the male-specific lethal (MSL) histone acetyltransferase complex, composed of mof, mle, msl-1, msl-2 and msl-3 proteins, as well as roX1 and roX2 non-coding RNAs. Interacts (via PEHE domain) with mof (via HAT domain) and msl-3 (via MRG domain); both interactions are direct. Interacts with tamo via the nuclear localization signal. Component of a maternal MSL subcomplex composed of mof, msl-1 and msl-3. In terms of processing, phosphorylation at Ser-18, Thr743, Thr-747 and Thr-751 is required to promote phosphorylation of 'Ser-5' of the C-terminal heptapeptide repeat domain (CTD) of the largest RNA polymerase II subunit Polr2A. Phosphorylated by Cdk7 in vitro. In contrast, phosphorylation at Ser-18, Thr743, Thr-747 and Thr-751 does not affect its role in dosage compensation in males. Ubiquitinated by msl-2.

The protein resides in the nucleus. Its subcellular location is the chromosome. In terms of biological role, component of the male-specific lethal (MSL) histone acetyltransferase complex, a multiprotein complex essential for elevating transcription of the single X chromosome in the male (X chromosome dosage compensation). The MSL complex specifically associates with the single X chromosome in males and mediates formation of H4K16ac, promoting a two-fold activation of X chromosome. In complex with msl-2, promotes ubiquitination of histone H2B. In addition to its role in dosage compensation in males, regulates the activity of gene promoters: acts together with Cdk7 to promote phosphorylation of 'Ser-5' of the C-terminal heptapeptide repeat domain (CTD) of the largest RNA polymerase II subunit Polr2A. This is Protein male-specific lethal-1 from Drosophila melanogaster (Fruit fly).